We begin with the raw amino-acid sequence, 166 residues long: 3-isopropylmalate dehydratase small subunit (166 aa).

This sequence belongs to the LeuD family. LeuD type 2 subfamily. In terms of assembly, heterodimer of LeuC and LeuD.

It carries out the reaction (2R,3S)-3-isopropylmalate = (2S)-2-isopropylmalate. The protein operates within amino-acid biosynthesis; L-leucine biosynthesis; L-leucine from 3-methyl-2-oxobutanoate: step 2/4. Functionally, catalyzes the isomerization between 2-isopropylmalate and 3-isopropylmalate, via the formation of 2-isopropylmaleate. The protein is 3-isopropylmalate dehydratase small subunit of Moorella thermoacetica (strain ATCC 39073 / JCM 9320).